Reading from the N-terminus, the 263-residue chain is uncharacterized protein (263 aa).

Residue 31 to 38 coordinates ATP; it reads GPTGSGKT.

This sequence belongs to the CbbQ/NirQ/NorQ/GpvN family.

This is an uncharacterized protein from Staphylococcus saprophyticus subsp. saprophyticus (strain ATCC 15305 / DSM 20229 / NCIMB 8711 / NCTC 7292 / S-41).